The primary structure comprises 140 residues: Ribosome-binding factor A (140 aa).

The segment at Arg116–Ser140 is disordered.

This sequence belongs to the RbfA family. In terms of assembly, monomer. Binds 30S ribosomal subunits, but not 50S ribosomal subunits or 70S ribosomes.

The protein resides in the cytoplasm. One of several proteins that assist in the late maturation steps of the functional core of the 30S ribosomal subunit. Associates with free 30S ribosomal subunits (but not with 30S subunits that are part of 70S ribosomes or polysomes). Required for efficient processing of 16S rRNA. May interact with the 5'-terminal helix region of 16S rRNA. This chain is Ribosome-binding factor A, found in Synechococcus sp. (strain WH7803).